The primary structure comprises 250 residues: Coproheme decarboxylase (250 aa).

Fe-coproporphyrin III contacts are provided by residues arginine 131, 145 to 149 (YPMNK), histidine 172, and glutamine 185. Tyrosine 145 is an active-site residue.

Belongs to the ChdC family. Type 1 subfamily. It depends on Fe-coproporphyrin III as a cofactor.

It catalyses the reaction Fe-coproporphyrin III + 2 H2O2 + 2 H(+) = heme b + 2 CO2 + 4 H2O. The enzyme catalyses Fe-coproporphyrin III + H2O2 + H(+) = harderoheme III + CO2 + 2 H2O. The catalysed reaction is harderoheme III + H2O2 + H(+) = heme b + CO2 + 2 H2O. It functions in the pathway porphyrin-containing compound metabolism; protoheme biosynthesis. Functionally, involved in coproporphyrin-dependent heme b biosynthesis. Catalyzes the decarboxylation of Fe-coproporphyrin III (coproheme) to heme b (protoheme IX), the last step of the pathway. The reaction occurs in a stepwise manner with a three-propionate intermediate. This chain is Coproheme decarboxylase, found in Staphylococcus aureus (strain Mu50 / ATCC 700699).